The sequence spans 433 residues: Dihydroorotase (433 aa).

Zn(2+)-binding residues include histidine 63 and histidine 65. Substrate is bound by residues 65–67 and asparagine 97; that span reads HLR. Positions 155, 182, and 235 each coordinate Zn(2+). Asparagine 283 provides a ligand contact to substrate. Aspartate 310 is a Zn(2+) binding site. Aspartate 310 is a catalytic residue. Histidine 314 contributes to the substrate binding site.

The protein belongs to the metallo-dependent hydrolases superfamily. DHOase family. Class I DHOase subfamily. Zn(2+) serves as cofactor.

The enzyme catalyses (S)-dihydroorotate + H2O = N-carbamoyl-L-aspartate + H(+). It participates in pyrimidine metabolism; UMP biosynthesis via de novo pathway; (S)-dihydroorotate from bicarbonate: step 3/3. Catalyzes the reversible cyclization of carbamoyl aspartate to dihydroorotate. This Anaeromyxobacter sp. (strain K) protein is Dihydroorotase.